We begin with the raw amino-acid sequence, 608 residues long: UvrABC system protein C (608 aa).

The region spanning 15 to 93 (HQPGVYRMYN…IKQYLPKYNV (79 aa)) is the GIY-YIG domain. The 36-residue stretch at 203 to 238 (RQVIQSLVEQMEGASQALNFEKAATIRDQIQSMRRV) folds into the UVR domain.

Belongs to the UvrC family. As to quaternary structure, interacts with UvrB in an incision complex.

Its subcellular location is the cytoplasm. In terms of biological role, the UvrABC repair system catalyzes the recognition and processing of DNA lesions. UvrC both incises the 5' and 3' sides of the lesion. The N-terminal half is responsible for the 3' incision and the C-terminal half is responsible for the 5' incision. This is UvrABC system protein C from Aliivibrio salmonicida (strain LFI1238) (Vibrio salmonicida (strain LFI1238)).